The chain runs to 436 residues: Ribulose bisphosphate carboxylase large chain (436 aa).

Substrate contacts are provided by N104 and T154. K156 serves as the catalytic Proton acceptor. K158 contributes to the substrate binding site. Positions 182, 184, and 185 each coordinate Mg(2+). K182 is modified (N6-carboxylysine). The active-site Proton acceptor is H275. Substrate-binding residues include R276, H308, and S360.

It belongs to the RuBisCO large chain family. Type I subfamily. As to quaternary structure, heterohexadecamer of 8 large chains and 8 small chains; disulfide-linked. The disulfide link is formed within the large subunit homodimers. It depends on Mg(2+) as a cofactor. In terms of processing, the disulfide bond which can form in the large chain dimeric partners within the hexadecamer appears to be associated with oxidative stress and protein turnover.

It localises to the plastid. Its subcellular location is the chloroplast. The catalysed reaction is 2 (2R)-3-phosphoglycerate + 2 H(+) = D-ribulose 1,5-bisphosphate + CO2 + H2O. It carries out the reaction D-ribulose 1,5-bisphosphate + O2 = 2-phosphoglycolate + (2R)-3-phosphoglycerate + 2 H(+). In terms of biological role, ruBisCO catalyzes two reactions: the carboxylation of D-ribulose 1,5-bisphosphate, the primary event in carbon dioxide fixation, as well as the oxidative fragmentation of the pentose substrate in the photorespiration process. Both reactions occur simultaneously and in competition at the same active site. The sequence is that of Ribulose bisphosphate carboxylase large chain from Euglena geniculata.